A 468-amino-acid polypeptide reads, in one-letter code: Na(+)/H(+) antiporter (468 aa).

The next 8 helical transmembrane spans lie at H12–F32, L36–A56, D81–F96, I103–Y123, G133–V153, L169–I189, W204–G224, and G258–F278. A glycan (N-linked (GlcNAc...) asparagine) is linked at N287. A helical membrane pass occupies residues V293–I313. The N-linked (GlcNAc...) asparagine glycan is linked to N319. Helical transmembrane passes span W320–C340, A362–A382, and I408–I428. 2 positions are modified to phosphoserine: S449 and S451.

Belongs to the fungal Na(+)/H(+) exchanger family.

The protein resides in the cell membrane. Its function is as follows. Sodium export from cell, takes up external protons in exchange for internal sodium ions. Involved in regulation of pH. The polypeptide is Na(+)/H(+) antiporter (Schizosaccharomyces pombe (strain 972 / ATCC 24843) (Fission yeast)).